A 265-amino-acid chain; its full sequence is Translation initiation factor 2 subunit alpha (265 aa).

The S1 motif domain maps to 12-83; the sequence is GELIIGTVYK…KKGHVDASLK (72 aa).

The protein belongs to the eIF-2-alpha family. Heterotrimer composed of an alpha, a beta and a gamma chain.

Its function is as follows. eIF-2 functions in the early steps of protein synthesis by forming a ternary complex with GTP and initiator tRNA. This is Translation initiation factor 2 subunit alpha from Methanobrevibacter smithii (strain ATCC 35061 / DSM 861 / OCM 144 / PS).